The primary structure comprises 414 residues: NADH kinase POS5, mitochondrial (414 aa).

The protein belongs to the NAD kinase family.

The protein localises to the mitochondrion matrix. The catalysed reaction is NADH + ATP = ADP + NADPH + H(+). Its function is as follows. Phosphorylates both NADH and NAD(+), with a twofold preference for NADH. Anti-oxidant factor and key source of the cellular reductant NADPH. This is NADH kinase POS5, mitochondrial (POS5) from Saccharomyces cerevisiae (strain ATCC 204508 / S288c) (Baker's yeast).